The sequence spans 237 residues: Sugar fermentation stimulation protein homolog (237 aa).

It belongs to the SfsA family.

In Pseudomonas fluorescens (strain Pf0-1), this protein is Sugar fermentation stimulation protein homolog.